Consider the following 298-residue polypeptide: Bifunctional protein FolD (298 aa).

Residues 165-167 (GRS), Ser-190, and Ile-231 contribute to the NADP(+) site.

This sequence belongs to the tetrahydrofolate dehydrogenase/cyclohydrolase family. In terms of assembly, homodimer.

It carries out the reaction (6R)-5,10-methylene-5,6,7,8-tetrahydrofolate + NADP(+) = (6R)-5,10-methenyltetrahydrofolate + NADPH. The catalysed reaction is (6R)-5,10-methenyltetrahydrofolate + H2O = (6R)-10-formyltetrahydrofolate + H(+). Its pathway is one-carbon metabolism; tetrahydrofolate interconversion. In terms of biological role, catalyzes the oxidation of 5,10-methylenetetrahydrofolate to 5,10-methenyltetrahydrofolate and then the hydrolysis of 5,10-methenyltetrahydrofolate to 10-formyltetrahydrofolate. This Prochlorococcus marinus (strain MIT 9515) protein is Bifunctional protein FolD.